The sequence spans 334 residues: MTIPGTILDTARTQVLEQGIGLNQQQLMEVLTLPEEQIPDLMELAHQVRLKWCGEEIEVEGIISLKTGGCPEDCHFCSQSGLFESPVRSVWLDIPNLVEAAKQTAKTGATEFCIVAAVKGPDERLMTQLEEAVLAIHSEVEIEVAASIGTLNKEQVDRLAAAGVHRYNHNLETARSYFPEVVTTHTWEERRETLRLVAEAGMEVCSGGILGMGETLEQRAEFAVQLAELDPHEVPMNFLDPRPGTPFADRELMDSRDALRSIGAFRLAMPHTMLRFAGGRELTLGDKGSEQALLGGINAMIVGNYLTTLGRPMEDDLDMMDRLQLPIKVLNKVI.

A Radical SAM core domain is found at 55 to 280 (EEIEVEGIIS…HTMLRFAGGR (226 aa)). [4Fe-4S] cluster is bound by residues cysteine 70, cysteine 74, and cysteine 77. 3 residues coordinate [2Fe-2S] cluster: cysteine 113, cysteine 205, and arginine 275.

This sequence belongs to the radical SAM superfamily. Biotin synthase family. In terms of assembly, homodimer. Requires [4Fe-4S] cluster as cofactor. It depends on [2Fe-2S] cluster as a cofactor.

The enzyme catalyses (4R,5S)-dethiobiotin + (sulfur carrier)-SH + 2 reduced [2Fe-2S]-[ferredoxin] + 2 S-adenosyl-L-methionine = (sulfur carrier)-H + biotin + 2 5'-deoxyadenosine + 2 L-methionine + 2 oxidized [2Fe-2S]-[ferredoxin]. It participates in cofactor biosynthesis; biotin biosynthesis; biotin from 7,8-diaminononanoate: step 2/2. Its function is as follows. Catalyzes the conversion of dethiobiotin (DTB) to biotin by the insertion of a sulfur atom into dethiobiotin via a radical-based mechanism. In Corynebacterium glutamicum (strain ATCC 13032 / DSM 20300 / JCM 1318 / BCRC 11384 / CCUG 27702 / LMG 3730 / NBRC 12168 / NCIMB 10025 / NRRL B-2784 / 534), this protein is Biotin synthase.